Reading from the N-terminus, the 4421-residue chain is Replicase polyprotein 1a (4421 aa).

The CoV Nsp1 globular domain maps to 54–174; the sequence is YDNHVKIDCR…HKWFQFCRLY (121 aa). The BetaCoV Nsp1 C-terminal domain maps to 192-222; the sequence is FSVEAAYAEVHAEPKGKYSQKAYALLRQYRG. The region spanning 226 to 488 is the CoV Nsp2 N-terminal domain; sequence VLFVDQYGCD…LITHALYLDY (263 aa). The Zn(2+) site is built by Cys-365, Cys-370, Cys-386, and Cys-389. Positions 365–389 are C4; that stretch reads CFNDNCDFYGWVSGNMMDGFSCPLC. The CoV Nsp2 middle domain maps to 493 to 681; that stretch reads CGNLEQNHIL…VNKFYTFFKL (189 aa). A CoV Nsp2 C-terminal domain is found at 697–809; the sequence is LKTINGLVCI…LDHAWRFPCA (113 aa). The 113-residue stretch at 811-923 folds into the Ubiquitin-like 1 domain; sequence RKVNFNEKPV…MYCTFAIEDV (113 aa). 9 tandem repeats follow at residues 945-954, 955-964, 965-974, 975-984, 985-994, 995-1004, 1005-1014, 1015-1024, and 1025-1034. Positions 945–1034 are 9 X 10 AA tandem repeat of N-[DN]-D-E-D-V-V-T-G-D; that stretch reads NDDEDVVTGD…NNDEDVVTGD (90 aa). The tract at residues 947-1042 is disordered; the sequence is DEDVVTGDND…GDNNDEESVT (96 aa). Residues 1073-1323 enclose the Peptidase C16 1 domain; that stretch reads VFNDVYNDAL…VCFVKGDIIN (251 aa). The active-site For PL1-PRO activity is the Cys-1111. Zn(2+) is bound by residues Cys-1188, Cys-1191, Cys-1214, and Cys-1216. A C4-type 1 zinc finger spans residues 1188–1216; sequence CLKCGFSFDLNGLDAVFFYGDIVSHVCKC. Active-site for PL1-PRO activity residues include His-1262 and Asp-1273. Positions 1301 to 1472 constitute a Macro domain; the sequence is ELAQLYGLCI…IIQKCQITSV (172 aa). A DPUP domain is found at 1528–1599; that stretch reads NDVRDYLLSK…TVNQVCVLLA (72 aa). The Ubiquitin-like 2 domain occupies 1599–1654; sequence AKKIDVLLTVDGVNFKSISLTVGEVFGKILGNVFCDGIDVTKLKCSDFYADKILYQ. One can recognise a Peptidase C16 2 domain in the interval 1668-1928; sequence SSFGFDQQQL…MVAYNPDLSQ (261 aa). Cys-1707 serves as the catalytic For PL2-PRO activity. Zn(2+) is bound by residues Cys-1785, Cys-1787, Cys-1819, and Cys-1821. A C4-type 2 zinc finger spans residues 1785–1821; the sequence is CDCGIKQESRVGVDAVMHFGTLAKTDLFNGYKIGCNC. Active-site for PL2-PRO activity residues include His-1864 and Asp-1878. Residues 1942 to 2043 enclose the Nucleic acid-binding domain; that stretch reads IKAQFKPFAK…TYFNKPSFKS (102 aa). Residues 2058-2207 enclose the G2M domain; the sequence is ESQGNVVTSV…NDKTIFYTTE (150 aa). 3 helical membrane passes run 2176-2196, 2237-2257, and 2268-2288; these read AIEFYGFLKWLFIYVFSLLHF, FLVVATVFLFWFNFLYINVIF, and FPIFVGRIVMWIKATFGLVTI. The tract at residues 2176-2413 is HD1; the sequence is AIEFYGFLKW…FVLLRFYIVV (238 aa). The region spanning 2273–2334 is the 3Ecto domain; that stretch reads GRIVMWIKAT…AIDFVQYEVD (62 aa). Intrachain disulfides connect Cys-2289–Cys-2313 and Cys-2304–Cys-2310. 2 consecutive transmembrane segments (helical) span residues 2351 to 2371 and 2393 to 2413; these read LVIGYSLYTVWFYPLFCLIGL and FIVFVANMLPAFVLLRFYIVV. Positions 2421 to 2511 are Y1; it reads GFIRHIVYGC…ELKRPVNPTD (91 aa). One can recognise a CoV Nsp3 Y domain in the interval 2421-2788; it reads GFIRHIVYGC…LTTPFSLKGG (368 aa). Residues His-2425, Cys-2430, Cys-2435, Cys-2438, Cys-2471, His-2474, Cys-2478, and Cys-2481 each contribute to the Zn(2+) site. The tract at residues 2425 to 2438 is ZF1; that stretch reads HIVYGCNKAGCLFC. The segment at 2471–2481 is ZF2; that stretch reads CVKHQWNCFNC. The segment at 2512–2604 is Y2; that stretch reads ASHYVVTDIK…LVDKKLITTA (93 aa). The segment at 2512–2788 is coV-Y; it reads ASHYVVTDIK…LTTPFSLKGG (277 aa). The tract at residues 2605–2687 is Y3; it reads CNGISVTQIM…KSMISAVAAG (83 aa). The interval 2688-2788 is Y4; that stretch reads LEFTDENYNN…LTTPFSLKGG (101 aa). The next 5 membrane-spanning stretches (helical) occupy residues 2794 to 2814, 3069 to 3089, 3101 to 3121, 3128 to 3148, and 3153 to 3173; these read LLYILFFISLICFILLWALLP, ASSIFGAILAIVVVLVFYYLI, VVVINVIVWCINFLMLFVFQV, VYACFYFYVTLYFPSEISVIM, and IVMYGAIMPFWFCVTYVAMVI. Residues 2794–3173 are HD2; sequence LLYILFFISL…FCVTYVAMVI (380 aa). The Nsp4C domain maps to 3187-3284; it reads IGVNVCSDST…TASVSTSFLQ (98 aa). Residues 3285-3587 form the Peptidase C30 domain; that stretch reads SGIVKMVSPT…YQQLAGVKLQ (303 aa). Active-site for 3CL-PRO activity residues include His-3325 and Cys-3429. 7 helical membrane-spanning segments follow: residues 3601-3621, 3626-3646, 3651-3671, 3694-3714, 3722-3742, 3750-3770, and 3793-3813; these read ILISTFLFSCIISAFVKWTIF, THMIGVTLCVLCFVSFMMLLV, FYLTMYIIPVLCTLFYVNYLV, FTYVYEVFYGCILCVFAIFIT, IFSLMFLVGRIVTLISMWYFG, LLFITAFLGTYTWTTILSLAI, and LILLSYLFIGYILSCYWGFFS. Residues 3601-3813 are HD3; it reads ILISTFLFSC…ILSCYWGFFS (213 aa). Residues 3875–3963 form the RdRp Nsp7 cofactor domain; the sequence is SKLTDVKCAN…DYVQDSTVLQ (89 aa). The RdRp Nsp8 cofactor domain occupies 3964–4160; it reads ALQSEFVNMA…YNEVANAVMQ (197 aa). The Nsp9 ssRNA-binding domain occupies 4161–4270; that stretch reads NNELMPHKLK…GTLSSTIRLQ (110 aa). The 138-residue stretch at 4271 to 4408 folds into the ExoN/MTase coactivator domain; the sequence is AGVATEYAAN…CVGSSVAVQS (138 aa). Zn(2+)-binding residues include Cys-4344, Cys-4347, His-4353, Cys-4360, Cys-4386, Cys-4389, Cys-4397, and Cys-4399. Zinc fingers lie at residues 4344-4360 and 4386-4399; these read CIYCRARVEHPDVDGIC and CQVCGFWRDGSCSC.

This sequence belongs to the coronaviruses polyprotein 1ab family. In terms of assembly, 3CL-PRO exists as monomer and homodimer. Eight copies of nsp7 and eight copies of nsp8 assemble to form a heterohexadecamer. Nsp9 is a dimer. Nsp10 forms a dodecamer. Post-translationally, specific enzymatic cleavages in vivo by its own proteases yield mature proteins. 3CL-PRO and PL-PRO proteinases are autocatalytically processed.

The protein localises to the host membrane. It is found in the host cytoplasm. Its subcellular location is the host perinuclear region. The catalysed reaction is Thiol-dependent hydrolysis of ester, thioester, amide, peptide and isopeptide bonds formed by the C-terminal Gly of ubiquitin (a 76-residue protein attached to proteins as an intracellular targeting signal).. The enzyme catalyses TSAVLQ-|-SGFRK-NH2 and SGVTFQ-|-GKFKK the two peptides corresponding to the two self-cleavage sites of the SARS 3C-like proteinase are the two most reactive peptide substrates. The enzyme exhibits a strong preference for substrates containing Gln at P1 position and Leu at P2 position.. It carries out the reaction a 5'-end diphospho-ribonucleoside in mRNA + GTP + H(+) = a 5'-end (5'-triphosphoguanosine)-ribonucleoside in mRNA + diphosphate. In terms of biological role, the papain-like proteinase 1 (PL1-PRO) and papain-like proteinase 2 (PL2-PRO) are responsible for the cleavages located at the N-terminus of the replicase polyprotein. In addition, PLP2 possesses a deubiquitinating/deISGylating activity and processes both 'Lys-48'- and 'Lys-63'-linked polyubiquitin chains from cellular substrates. Antagonizes innate immune induction of type I interferon by blocking the phosphorylation, dimerization and subsequent nuclear translocation of host IRF-3. Responsible for the majority of cleavages as it cleaves the C-terminus of replicase polyprotein at 11 sites. Recognizes substrates containing the core sequence [ILMVF]-Q-|-[SGACN]. Inhibited by the substrate-analog Cbz-Val-Asn-Ser-Thr-Leu-Gln-CMK. Also contains an ADP-ribose-1''-phosphate (ADRP)-binding function. Functionally, nsp7-nsp8 hexadecamer may possibly confer processivity to the polymerase, maybe by binding to dsRNA or by producing primers utilized by the latter. Its function is as follows. Catalytic subunit of viral RNA capping enzyme which catalyzes the RNA guanylyltransferase reaction for genomic and sub-genomic RNAs. The kinase-like NiRAN domain of NSP12 transfers RNA to the amino terminus of NSP9, forming a covalent RNA-protein intermediate. Subsequently, the NiRAN domain transfers RNA to GDP, forming the core cap structure GpppA-RNA. The NSP14 and NSP16 methyltransferases then add methyl groups to form functional cap structures. In terms of biological role, binds to the 40S ribosomal subunit and inhibits host translation. The nsp1-40S ribosome complex further induces an endonucleolytic cleavage near the 5'UTR of host mRNAs, targeting them for degradation. By suppressing host gene expression, nsp1 facilitates efficient viral gene expression in infected cells and evasion from host immune response. The chain is Replicase polyprotein 1a from Human coronavirus HKU1 (isolate N5) (HCoV-HKU1).